The sequence spans 735 residues: 5-methyltetrahydropteroyltriglutamate--homocysteine methyltransferase (735 aa).

5-methyltetrahydropteroyltri-L-glutamate contacts are provided by residues 15 to 18 (REFK) and K104. L-homocysteine-binding positions include 409–411 (IGS) and E462. L-methionine is bound by residues 409–411 (IGS) and E462. Residues 493–494 (RC) and W539 each bind 5-methyltetrahydropteroyltri-L-glutamate. D577 contributes to the L-homocysteine binding site. Residue D577 participates in L-methionine binding. 5-methyltetrahydropteroyltri-L-glutamate is bound at residue E583. Zn(2+)-binding residues include H618, C620, and E642. The active-site Proton donor is the H672. C704 is a binding site for Zn(2+).

Belongs to the vitamin-B12 independent methionine synthase family. Zn(2+) serves as cofactor.

It carries out the reaction 5-methyltetrahydropteroyltri-L-glutamate + L-homocysteine = tetrahydropteroyltri-L-glutamate + L-methionine. It participates in amino-acid biosynthesis; L-methionine biosynthesis via de novo pathway; L-methionine from L-homocysteine (MetE route): step 1/1. Catalyzes the transfer of a methyl group from 5-methyltetrahydrofolate to homocysteine resulting in methionine formation. This is 5-methyltetrahydropteroyltriglutamate--homocysteine methyltransferase from Thermotoga petrophila (strain ATCC BAA-488 / DSM 13995 / JCM 10881 / RKU-1).